An 88-amino-acid polypeptide reads, in one-letter code: HssA/B-like protein 64 (88 aa).

Residues 1 to 24 (MTLFSSISSMSSSMTSSKSSFASF) show a composition bias toward low complexity. Disordered stretches follow at residues 1–25 (MTLF…ASFG) and 45–88 (GVSS…GNSC). Residues 56-66 (AKSGGDCGGKG) show a composition bias toward gly residues.

Belongs to the hssA/B family.

In Dictyostelium discoideum (Social amoeba), this protein is HssA/B-like protein 64 (hssl64).